A 647-amino-acid polypeptide reads, in one-letter code: Neuronal PAS domain-containing protein 4-like (647 aa).

A basic motif; degenerate region spans residues lysine 16 to arginine 29. The bHLH domain maps to lysine 16 to serine 67. Positions aspartate 30–serine 67 are helix-loop-helix motif. PAS domains follow at residues valine 117–glycine 181 and serine 238–aspartate 274.

As to quaternary structure, heterodimer; efficient DNA binding requires dimerization with another bHLH protein. In terms of tissue distribution, specifically expressed in endothelial and hematopoietic precursor cells.

It is found in the nucleus. Functionally, transcription factor specifically expressed in endothelial and hematopoietic precursor cells that acts as a key regulator of the endothelial differentiation cascade. Acts as an early-response transcription factor that regulates the expression of early regulators of endothelial and haematopoietic differentiation, such as etv2 and tal1. The chain is Neuronal PAS domain-containing protein 4-like from Danio rerio (Zebrafish).